The chain runs to 932 residues: MTNERKEVSEAPVNFGANLGLMLDLYDDFLQDPSSVPEDLQVLFSTIKNDDSIVPSLKSTSSQNSDGTIKRVMRLIDNIRQYGHLKADIYPVNPPKRKHVPKLEIEDFDLDQQTLEGISAGIVSDHFADIYDNAYEAILRMEKRYKGPIAFEYTHINNNTERGWLKRRIETPYKVTLNNNEKRALFKQLAYVEGFEKYLHKNFVGAKRFSIEGVDALVPMLQRTITIAAKEGIKNIQIGMAHRGRLNVLTHVLEKPYEMMISEFMHTDPMKFLPEDGSLQLTAGWTGDVKYHLGGIKTTDSYGTMQRIALANNPSHLEIVAPVVEGRTRAAQDDTQRAGAPTTDHHKAMPIIIHGDGAYPGQGINFETMNLGNLKGYSTGGSLHIITNNRIGFTTEPIDARSTTYSTDVAKGYDVPIFHVNADDVEATIEAIDIAMEFRKEFHKDVVIDLVGYRRFGHNEMDEPSITNPVPYQNIRKNDSVEYVFGKKLVNEGVISEDEMHSFIEQVQKELRQAHDKINKADKMDNPDMEKPAELALPLQADEQSFTFDHLKEINDALLTYPDGFNILKKLNKVLKKRHEPFNKEDGLVDWAQAEQLAFATILQDGTPIRLTGQDSERGTFSHRHAVLHDEQTGETYTPLHHVPNQKATFDIHNSPLSEAAVVGFEYGYNVENKKSFNIWEAQYGDFANMSQMIFDNFLFSSRSKWGERSGLTLFLPHAYEGQGPEHSSARLERFLQLAAENNCTVVNLSSSSNYFHLLRAQAASLDSEQMRPLVVMSPKSLLRNKTVAKPIDEFTSGGFEPILTESYQADKVTKVILATGKMFIDLKEALAKNPDESVLLVAIERLYPFPEEEIETLLAQLPNLEEVSWVQEEPKNQGAWLYVYPYVKVLVADKYDLSYHGRIQRAAPAEGDGEIHKLVQNKIIENALKNN.

It belongs to the alpha-ketoglutarate dehydrogenase family. As to quaternary structure, homodimer. Part of the 2-oxoglutarate dehydrogenase (OGDH) complex composed of E1 (2-oxoglutarate dehydrogenase), E2 (dihydrolipoamide succinyltransferase) and E3 (dihydrolipoamide dehydrogenase); the complex contains multiple copies of the three enzymatic components (E1, E2 and E3). Thiamine diphosphate is required as a cofactor.

The enzyme catalyses N(6)-[(R)-lipoyl]-L-lysyl-[protein] + 2-oxoglutarate + H(+) = N(6)-[(R)-S(8)-succinyldihydrolipoyl]-L-lysyl-[protein] + CO2. Its function is as follows. E1 component of the 2-oxoglutarate dehydrogenase (OGDH) complex which catalyzes the decarboxylation of 2-oxoglutarate, the first step in the conversion of 2-oxoglutarate to succinyl-CoA and CO(2). The protein is 2-oxoglutarate dehydrogenase E1 component of Staphylococcus aureus (strain bovine RF122 / ET3-1).